The primary structure comprises 78 residues: Large ribosomal subunit protein bL28 (78 aa).

The protein belongs to the bacterial ribosomal protein bL28 family.

The chain is Large ribosomal subunit protein bL28 from Thioalkalivibrio sulfidiphilus (strain HL-EbGR7).